The chain runs to 425 residues: Riboflavin biosynthesis protein RibBA (425 aa).

The segment at 1-204 is DHBP synthase; the sequence is MTRLDSVERA…IADLIEWRRK (204 aa). D-ribulose 5-phosphate is bound by residues 28–29, aspartate 33, 141–145, and glutamate 165; these read RE and RPGHT. Glutamate 29 contributes to the Mg(2+) binding site. Histidine 144 lines the Mg(2+) pocket. The GTP cyclohydrolase II stretch occupies residues 205–425; that stretch reads HEKHIERVAE…HLPGEFGGAL (221 aa). 259–263 contacts GTP; that stretch reads RVHSE. Cysteine 264, cysteine 275, and cysteine 277 together coordinate Zn(2+). GTP is bound by residues glutamine 280, 303–305, and threonine 325; that span reads EGR. Residue aspartate 337 is the Proton acceptor; for GTP cyclohydrolase activity of the active site. Arginine 339 functions as the Nucleophile; for GTP cyclohydrolase activity in the catalytic mechanism. The GTP site is built by threonine 360 and lysine 365.

The protein in the N-terminal section; belongs to the DHBP synthase family. This sequence in the C-terminal section; belongs to the GTP cyclohydrolase II family. Mg(2+) serves as cofactor. It depends on Mn(2+) as a cofactor. Requires Zn(2+) as cofactor.

It carries out the reaction D-ribulose 5-phosphate = (2S)-2-hydroxy-3-oxobutyl phosphate + formate + H(+). The catalysed reaction is GTP + 4 H2O = 2,5-diamino-6-hydroxy-4-(5-phosphoribosylamino)-pyrimidine + formate + 2 phosphate + 3 H(+). Its pathway is cofactor biosynthesis; riboflavin biosynthesis; 2-hydroxy-3-oxobutyl phosphate from D-ribulose 5-phosphate: step 1/1. It participates in cofactor biosynthesis; riboflavin biosynthesis; 5-amino-6-(D-ribitylamino)uracil from GTP: step 1/4. Catalyzes the conversion of D-ribulose 5-phosphate to formate and 3,4-dihydroxy-2-butanone 4-phosphate. Its function is as follows. Catalyzes the conversion of GTP to 2,5-diamino-6-ribosylamino-4(3H)-pyrimidinone 5'-phosphate (DARP), formate and pyrophosphate. The sequence is that of Riboflavin biosynthesis protein RibBA from Mycobacterium marinum (strain ATCC BAA-535 / M).